Here is a 40-residue protein sequence, read N- to C-terminus: Photosystem II reaction center protein J (40 aa).

A helical membrane pass occupies residues 8–28; that stretch reads IPLWLIGTVTGIPVIGSIGIF.

The protein belongs to the PsbJ family. PSII is composed of 1 copy each of membrane proteins PsbA, PsbB, PsbC, PsbD, PsbE, PsbF, PsbH, PsbI, PsbJ, PsbK, PsbL, PsbM, PsbT, PsbX, PsbY, PsbZ, Psb30/Ycf12, at least 3 peripheral proteins of the oxygen-evolving complex and a large number of cofactors. It forms dimeric complexes.

The protein localises to the plastid. It is found in the chloroplast thylakoid membrane. In terms of biological role, one of the components of the core complex of photosystem II (PSII). PSII is a light-driven water:plastoquinone oxidoreductase that uses light energy to abstract electrons from H(2)O, generating O(2) and a proton gradient subsequently used for ATP formation. It consists of a core antenna complex that captures photons, and an electron transfer chain that converts photonic excitation into a charge separation. The polypeptide is Photosystem II reaction center protein J (Chloranthus spicatus (Chulantree)).